Consider the following 447-residue polypeptide: NADP-specific glutamate dehydrogenase (447 aa).

Positions 92, 113, and 116 each coordinate substrate. The Proton donor role is filled by Lys128. Position 167 (Gly167) interacts with substrate. Positions 212 and 243 each coordinate NADP(+). Ser379 serves as a coordination point for substrate.

Belongs to the Glu/Leu/Phe/Val dehydrogenases family. As to quaternary structure, homohexamer.

The catalysed reaction is L-glutamate + NADP(+) + H2O = 2-oxoglutarate + NH4(+) + NADPH + H(+). Its function is as follows. Catalyzes the reversible oxidative deamination of glutamate to alpha-ketoglutarate and ammonia. This is NADP-specific glutamate dehydrogenase (gdh) from Corynebacterium glutamicum (strain ATCC 13032 / DSM 20300 / JCM 1318 / BCRC 11384 / CCUG 27702 / LMG 3730 / NBRC 12168 / NCIMB 10025 / NRRL B-2784 / 534).